Reading from the N-terminus, the 253-residue chain is Phosphoglycerate mutase 2 (253 aa).

Threonine 3 is modified (phosphothreonine). Substrate is bound by residues 10–17 (RHGESTWN), 23–24 (CG), arginine 62, 89–92 (ERHY), lysine 100, and 116–117 (RR). Catalysis depends on histidine 11, which acts as the Tele-phosphohistidine intermediate. At serine 14 the chain carries Phosphoserine. Residue glutamate 89 is the Proton donor/acceptor of the active site. Serine 118 bears the Phosphoserine mark. Phosphotyrosine is present on residues tyrosine 132 and tyrosine 133. Serine 135 bears the Phosphoserine mark. At threonine 152 the chain carries Phosphothreonine. Substrate is bound at residue 187 to 188 (GN).

This sequence belongs to the phosphoglycerate mutase family. BPG-dependent PGAM subfamily. As to quaternary structure, homodimer. Interacts with ENO1. In terms of tissue distribution, expressed in the heart and muscle. Not found in the liver and brain.

The enzyme catalyses (2R)-2-phosphoglycerate = (2R)-3-phosphoglycerate. The catalysed reaction is (2R)-3-phospho-glyceroyl phosphate = (2R)-2,3-bisphosphoglycerate + H(+). Its function is as follows. Interconversion of 3- and 2-phosphoglycerate with 2,3-bisphosphoglycerate as the primer of the reaction. Can also catalyze the reaction of EC 5.4.2.4 (synthase), but with a reduced activity. The polypeptide is Phosphoglycerate mutase 2 (PGAM2) (Homo sapiens (Human)).